Here is a 76-residue protein sequence, read N- to C-terminus: Sec-independent protein translocase protein TatA (76 aa).

A helical membrane pass occupies residues 1–21 (MGGLSIWHWLIVLLIVALVFG). The disordered stretch occupies residues 43 to 76 (MKEGEAPADAQQLPRSGSVDVNAKETTRSDSNKA). A compositionally biased stretch (basic and acidic residues) spans 64–76 (NAKETTRSDSNKA).

Belongs to the TatA/E family. In terms of assembly, the Tat system comprises two distinct complexes: a TatABC complex, containing multiple copies of TatA, TatB and TatC subunits, and a separate TatA complex, containing only TatA subunits. Substrates initially bind to the TatABC complex, which probably triggers association of the separate TatA complex to form the active translocon.

The protein resides in the cell inner membrane. Functionally, part of the twin-arginine translocation (Tat) system that transports large folded proteins containing a characteristic twin-arginine motif in their signal peptide across membranes. TatA could form the protein-conducting channel of the Tat system. This chain is Sec-independent protein translocase protein TatA, found in Burkholderia lata (strain ATCC 17760 / DSM 23089 / LMG 22485 / NCIMB 9086 / R18194 / 383).